The primary structure comprises 429 residues: Tol-Pal system protein TolB (429 aa).

The first 28 residues, 1-28, serve as a signal peptide directing secretion; sequence MSITPSFSRRSVVSLLAAGAFSSMSAFA.

It belongs to the TolB family. In terms of assembly, the Tol-Pal system is composed of five core proteins: the inner membrane proteins TolA, TolQ and TolR, the periplasmic protein TolB and the outer membrane protein Pal. They form a network linking the inner and outer membranes and the peptidoglycan layer.

The protein resides in the periplasm. Part of the Tol-Pal system, which plays a role in outer membrane invagination during cell division and is important for maintaining outer membrane integrity. In Polaromonas naphthalenivorans (strain CJ2), this protein is Tol-Pal system protein TolB.